The primary structure comprises 404 residues: Glucose-1-phosphate adenylyltransferase (404 aa).

Alpha-D-glucose 1-phosphate-binding positions include Tyr99, Gly164, 179–180 (EK), and Ser197.

This sequence belongs to the bacterial/plant glucose-1-phosphate adenylyltransferase family. As to quaternary structure, homotetramer.

It carries out the reaction alpha-D-glucose 1-phosphate + ATP + H(+) = ADP-alpha-D-glucose + diphosphate. Its pathway is glycan biosynthesis; glycogen biosynthesis. Involved in the biosynthesis of ADP-glucose, a building block required for the elongation reactions to produce glycogen. Catalyzes the reaction between ATP and alpha-D-glucose 1-phosphate (G1P) to produce pyrophosphate and ADP-Glc. The chain is Glucose-1-phosphate adenylyltransferase from Rhodococcus jostii (strain RHA1).